The following is a 426-amino-acid chain: Glutamate-1-semialdehyde 2,1-aminomutase (426 aa).

Lys-268 carries the N6-(pyridoxal phosphate)lysine modification.

Belongs to the class-III pyridoxal-phosphate-dependent aminotransferase family. HemL subfamily. The cofactor is pyridoxal 5'-phosphate.

Its subcellular location is the cytoplasm. The enzyme catalyses (S)-4-amino-5-oxopentanoate = 5-aminolevulinate. It participates in porphyrin-containing compound metabolism; protoporphyrin-IX biosynthesis; 5-aminolevulinate from L-glutamyl-tRNA(Glu): step 2/2. This Saccharolobus islandicus (strain M.16.27) (Sulfolobus islandicus) protein is Glutamate-1-semialdehyde 2,1-aminomutase.